The sequence spans 407 residues: Peptidase T (407 aa).

His82 contacts Zn(2+). Asp84 is an active-site residue. Asp143 serves as a coordination point for Zn(2+). Catalysis depends on Glu177, which acts as the Proton acceptor. Zn(2+) is bound by residues Glu178, Asp200, and His382.

Belongs to the peptidase M20B family. Zn(2+) is required as a cofactor.

Its subcellular location is the cytoplasm. It catalyses the reaction Release of the N-terminal residue from a tripeptide.. Its function is as follows. Cleaves the N-terminal amino acid of tripeptides. The chain is Peptidase T from Streptococcus pyogenes serotype M12 (strain MGAS2096).